We begin with the raw amino-acid sequence, 36 residues long: Kappa-theraphotoxin-Aa1a (36 aa).

3 disulfide bridges follow: Cys3–Cys18, Cys10–Cys23, and Cys17–Cys30. Ile36 bears the Isoleucine amide mark.

The protein belongs to the neurotoxin 10 (Hwtx-1) family. As to expression, expressed by the venom gland.

The protein resides in the secreted. Selective inhibitor of voltage-gated potassium channel Kv10.1/KCNH1/EAG1 (IC(50)=637 nM). It acts by shifting the voltage dependence of channel activation in a depolarising direction. It shows a 100% inhibition at saturating concentrations, shows fast on-rates and is reversible. It also slightly affects channel inactivation, when the membrane is highly depolarised (&gt;+80 mV). The chain is Kappa-theraphotoxin-Aa1a from Avicularia aurantiaca (Yellow-banded pinktoe tarantula).